The sequence spans 249 residues: Metallo-beta-lactamase type 2 (249 aa).

The N-terminal stretch at 1-22 (MLKRLKGLLVLALGFTGLQVFG) is a signal peptide. Residues histidine 98, histidine 100, aspartate 102, histidine 161, and cysteine 180 each contribute to the Zn(2+) site. Position 183 (lysine 183) interacts with substrate. Histidine 222 contributes to the Zn(2+) binding site.

This sequence belongs to the metallo-beta-lactamase superfamily. Class-B beta-lactamase family. Monomer. The cofactor is Zn(2+).

The protein resides in the periplasm. The enzyme catalyses a beta-lactam + H2O = a substituted beta-amino acid. Functionally, confers resistance to the different beta-lactams antibiotics (penicillin, cephalosporin and carbapenem) via the hydrolysis of the beta-lactam ring. The sequence is that of Metallo-beta-lactamase type 2 (blaB5) from Elizabethkingia meningoseptica (Chryseobacterium meningosepticum).